The sequence spans 119 residues: Ribonuclease P protein component (119 aa).

Belongs to the RnpA family. Consists of a catalytic RNA component (M1 or rnpB) and a protein subunit.

It carries out the reaction Endonucleolytic cleavage of RNA, removing 5'-extranucleotides from tRNA precursor.. In terms of biological role, RNaseP catalyzes the removal of the 5'-leader sequence from pre-tRNA to produce the mature 5'-terminus. It can also cleave other RNA substrates such as 4.5S RNA. The protein component plays an auxiliary but essential role in vivo by binding to the 5'-leader sequence and broadening the substrate specificity of the ribozyme. In Borreliella burgdorferi (strain ZS7) (Borrelia burgdorferi), this protein is Ribonuclease P protein component.